We begin with the raw amino-acid sequence, 571 residues long: Proline--tRNA ligase (571 aa).

The protein belongs to the class-II aminoacyl-tRNA synthetase family. ProS type 1 subfamily. As to quaternary structure, homodimer.

It is found in the cytoplasm. It carries out the reaction tRNA(Pro) + L-proline + ATP = L-prolyl-tRNA(Pro) + AMP + diphosphate. Catalyzes the attachment of proline to tRNA(Pro) in a two-step reaction: proline is first activated by ATP to form Pro-AMP and then transferred to the acceptor end of tRNA(Pro). As ProRS can inadvertently accommodate and process non-cognate amino acids such as alanine and cysteine, to avoid such errors it has two additional distinct editing activities against alanine. One activity is designated as 'pretransfer' editing and involves the tRNA(Pro)-independent hydrolysis of activated Ala-AMP. The other activity is designated 'posttransfer' editing and involves deacylation of mischarged Ala-tRNA(Pro). The misacylated Cys-tRNA(Pro) is not edited by ProRS. This chain is Proline--tRNA ligase, found in Glaesserella parasuis serovar 5 (strain SH0165) (Haemophilus parasuis).